The primary structure comprises 284 residues: WUSCHEL-related homeobox 10 (284 aa).

The interval 1 to 43 is disordered; the sequence is MDRTATASWEVMSRRGEQQQQLMMQAPASHNGGSGGGEPARSR. The segment at residues 39–103 is a DNA-binding region (homeobox; WUS-type); it reads PARSRWAPKP…NRRSRSRRRA (65 aa).

The protein belongs to the WUS homeobox family.

The protein localises to the nucleus. In terms of biological role, transcription factor which may be involved in developmental processes. This chain is WUSCHEL-related homeobox 10 (WOX10), found in Oryza sativa subsp. japonica (Rice).